We begin with the raw amino-acid sequence, 323 residues long: MKKTLIILTVLLLSVLTAACSSSSGNQNSKEHKVAVTHDLGKTNVPEHPKRVVVLELGFIDTLLDLGITPVGVADDNKAKQLINKDVLKKIDGYTSVGTRSQPSMEKIASLKPDLIIADTTRHKKVYDQLKKIAPTIALNNLNADYQDTIDASLTIAKAVGKEKEMEKKLTAHEEKLSETKQKISANSQSVLLIGNTNDTIMARDENFFTSRLLTQVGYRYAISTSGNSDSSNGGDSVNMKMTLEQLLKTDPDVIILMTGKTDDLDADGKRPIEKNVLWKKLKAVKNGHVYHVDRAVWSLRRSVDGANAILDELQKEMPAAKK.

The N-terminal stretch at 1 to 19 (MKKTLIILTVLLLSVLTAA) is a signal peptide. C20 is lipidated: N-palmitoyl cysteine. A lipid anchor (S-diacylglycerol cysteine) is attached at C20. One can recognise a Fe/B12 periplasmic-binding domain in the interval 51–322 (RVVVLELGFI…ELQKEMPAAK (272 aa)).

It belongs to the bacterial solute-binding protein 8 family. In terms of assembly, interacts with FloT.

Its subcellular location is the cell membrane. The protein resides in the membrane raft. This is Putative ABC transporter substrate-binding lipoprotein YhfQ (yhfQ) from Bacillus subtilis (strain 168).